We begin with the raw amino-acid sequence, 113 residues long: Prefoldin subunit beta (113 aa).

It belongs to the prefoldin subunit beta family. In terms of assembly, heterohexamer of two alpha and four beta subunits.

Its subcellular location is the cytoplasm. In terms of biological role, molecular chaperone capable of stabilizing a range of proteins. Seems to fulfill an ATP-independent, HSP70-like function in archaeal de novo protein folding. The sequence is that of Prefoldin subunit beta (pfdB) from Methanocaldococcus jannaschii (strain ATCC 43067 / DSM 2661 / JAL-1 / JCM 10045 / NBRC 100440) (Methanococcus jannaschii).